The following is a 272-amino-acid chain: Ribosomal RNA small subunit methyltransferase A (272 aa).

S-adenosyl-L-methionine contacts are provided by Asn-18, Leu-20, Gly-45, Glu-66, Asp-91, and Asn-113.

The protein belongs to the class I-like SAM-binding methyltransferase superfamily. rRNA adenine N(6)-methyltransferase family. RsmA subfamily.

It is found in the cytoplasm. The catalysed reaction is adenosine(1518)/adenosine(1519) in 16S rRNA + 4 S-adenosyl-L-methionine = N(6)-dimethyladenosine(1518)/N(6)-dimethyladenosine(1519) in 16S rRNA + 4 S-adenosyl-L-homocysteine + 4 H(+). Specifically dimethylates two adjacent adenosines (A1518 and A1519) in the loop of a conserved hairpin near the 3'-end of 16S rRNA in the 30S particle. May play a critical role in biogenesis of 30S subunits. The chain is Ribosomal RNA small subunit methyltransferase A from Photorhabdus laumondii subsp. laumondii (strain DSM 15139 / CIP 105565 / TT01) (Photorhabdus luminescens subsp. laumondii).